A 458-amino-acid polypeptide reads, in one-letter code: Cysteine--tRNA ligase (458 aa).

Residue C29 coordinates Zn(2+). Residues 31–41 (MTVYDLCHLGH) carry the 'HIGH' region motif. Zn(2+) is bound by residues C213, H238, and E242. Residues 270 to 274 (KMSKS) carry the 'KMSKS' region motif. ATP is bound at residue K273.

This sequence belongs to the class-I aminoacyl-tRNA synthetase family. As to quaternary structure, monomer. Requires Zn(2+) as cofactor.

The protein localises to the cytoplasm. The enzyme catalyses tRNA(Cys) + L-cysteine + ATP = L-cysteinyl-tRNA(Cys) + AMP + diphosphate. The polypeptide is Cysteine--tRNA ligase (Acidovorax sp. (strain JS42)).